The primary structure comprises 424 residues: Arogenate dehydratase 3, chloroplastic (424 aa).

The transit peptide at 1–24 directs the protein to the chloroplast; that stretch reads MRTLLPSHTPATVTTAARRRHVIH. Over residues 57–71 the composition is skewed to low complexity; the sequence is EQSESLSSNSNGSSS. The interval 57–77 is disordered; sequence EQSESLSSNSNGSSSYHVSAV. The 178-residue stretch at 122–299 folds into the Prephenate dehydratase domain; the sequence is RVAYQGVPGA…NVTRFVMLAR (178 aa). The region spanning 313–404 is the ACT domain; that stretch reads SIVFAHEKGT…SFLRVLGSYP (92 aa).

In terms of assembly, may interact with GPA1. In terms of tissue distribution, expressed in roots, leaves, stems, flowers and siliques.

The protein localises to the plastid. It localises to the chloroplast stroma. It carries out the reaction L-arogenate + H(+) = L-phenylalanine + CO2 + H2O. Its pathway is amino-acid biosynthesis; L-phenylalanine biosynthesis; L-phenylalanine from L-arogenate: step 1/1. In terms of biological role, converts the prephenate produced from the shikimate-chorismate pathway into phenylalanine. Together with GCR1 and GPA1, required for blue light-mediated synthesis of phenylpyruvate and subsequently of phenylalanine (Phe), in etiolated seedlings. This Arabidopsis thaliana (Mouse-ear cress) protein is Arogenate dehydratase 3, chloroplastic.